A 944-amino-acid polypeptide reads, in one-letter code: Nonsense-mediated mRNA decay factor SMG8 (944 aa).

Disordered regions lie at residues 560-597 and 628-653; these read NTGK…QNTA and QASS…DTEN. Acidic residues predominate over residues 568 to 583; it reads QDEDAGEDEAEEEEGQ. The span at 628–650 shows a compositional bias: polar residues; it reads QASSEQLSNSEQNTTSSGTSSAD.

Belongs to the SMG8 family.

Its function is as follows. Involved in nonsense-mediated decay (NMD) of mRNAs containing premature stop codons. Probable component of kinase complex containing nonC and recruited to stalled ribosomes. This Drosophila simulans (Fruit fly) protein is Nonsense-mediated mRNA decay factor SMG8.